We begin with the raw amino-acid sequence, 516 residues long: Bifunctional pantoate ligase/cytidylate kinase (516 aa).

The segment at 1–279 (MVRKIFQTNA…CGSTRLIDHT (279 aa)) is pantoate--beta-alanine ligase. Residue 29 to 36 (MGGLHPGH) participates in ATP binding. His-36 acts as the Proton donor in catalysis. Residue Gln-64 participates in (R)-pantoate binding. Gln-64 serves as a coordination point for beta-alanine. 153–156 (GEKD) provides a ligand contact to ATP. Gln-159 contacts (R)-pantoate. 190 to 193 (YSSR) is a binding site for ATP. Positions 280-516 (FLMHRKPIIA…PEEVWPTPNS (237 aa)) are cytidylate kinase.

It in the N-terminal section; belongs to the pantothenate synthetase family. The protein in the C-terminal section; belongs to the cytidylate kinase family. Type 1 subfamily.

The protein resides in the cytoplasm. The catalysed reaction is (R)-pantoate + beta-alanine + ATP = (R)-pantothenate + AMP + diphosphate + H(+). The enzyme catalyses CMP + ATP = CDP + ADP. It catalyses the reaction dCMP + ATP = dCDP + ADP. Its pathway is cofactor biosynthesis; (R)-pantothenate biosynthesis; (R)-pantothenate from (R)-pantoate and beta-alanine: step 1/1. Catalyzes the condensation of pantoate with beta-alanine in an ATP-dependent reaction via a pantoyl-adenylate intermediate. In terms of biological role, catalyzes the transfer of a phosphate group from ATP to either CMP or dCMP to form CDP or dCDP and ADP, respectively. This Prochlorococcus marinus (strain NATL1A) protein is Bifunctional pantoate ligase/cytidylate kinase.